Reading from the N-terminus, the 428-residue chain is Serine--tRNA ligase (428 aa).

235-237 contacts L-serine; sequence TAE. Residue 266–268 coordinates ATP; sequence RSE. Glutamate 289 lines the L-serine pocket. 353–356 contacts ATP; sequence EISS. Position 389 (serine 389) interacts with L-serine.

It belongs to the class-II aminoacyl-tRNA synthetase family. Type-1 seryl-tRNA synthetase subfamily. As to quaternary structure, homodimer. The tRNA molecule binds across the dimer.

It is found in the cytoplasm. It catalyses the reaction tRNA(Ser) + L-serine + ATP = L-seryl-tRNA(Ser) + AMP + diphosphate + H(+). The catalysed reaction is tRNA(Sec) + L-serine + ATP = L-seryl-tRNA(Sec) + AMP + diphosphate + H(+). The protein operates within aminoacyl-tRNA biosynthesis; selenocysteinyl-tRNA(Sec) biosynthesis; L-seryl-tRNA(Sec) from L-serine and tRNA(Sec): step 1/1. Catalyzes the attachment of serine to tRNA(Ser). Is also able to aminoacylate tRNA(Sec) with serine, to form the misacylated tRNA L-seryl-tRNA(Sec), which will be further converted into selenocysteinyl-tRNA(Sec). The sequence is that of Serine--tRNA ligase from Shewanella denitrificans (strain OS217 / ATCC BAA-1090 / DSM 15013).